Here is a 72-residue protein sequence, read N- to C-terminus: Protein kish-A (72 aa).

The first 26 residues, 1–26, serve as a signal peptide directing secretion; it reads MSAIFNFQSLLTVILLLICTCAYIRS. Residues 27–53 lie on the Extracellular side of the membrane; the sequence is LTPSLLDKNKTGFLGIFWKCARIGERK. An N-linked (GlcNAc...) asparagine glycan is attached at Asn-35. A helical transmembrane segment spans residues 54 to 71; it reads SPYVAFCCIVMALTILFS. Position 72 (Glu-72) is a topological domain, cytoplasmic.

It belongs to the KISH family.

The protein resides in the golgi apparatus membrane. Functionally, involved in the early part of the secretory pathway. The protein is Protein kish-A (tmem167a) of Danio rerio (Zebrafish).